A 288-amino-acid polypeptide reads, in one-letter code: Transmembrane and coiled-coil domain-containing protein 5A (288 aa).

A coiled-coil region spans residues 13-105; sequence IISLNMDLER…VHSISELQRK (93 aa). The chain crosses the membrane as a helical span at residues 227–249; it reads SLLFSTLFFIRLLGYLIFHLSFI.

In terms of tissue distribution, testis-specific. Expressed in spermatogenic cells of testis but disappear by the time mature spermatozoa are formed (at protein level).

The protein resides in the endoplasmic reticulum membrane. Its subcellular location is the nucleus membrane. In Rattus norvegicus (Rat), this protein is Transmembrane and coiled-coil domain-containing protein 5A (Tmco5a).